Consider the following 339-residue polypeptide: Transcription factor IIIA (339 aa).

C2H2-type zinc fingers lie at residues 12–36 (FICS…LCKH), 42–66 (FPCT…VLSH), 72–97 (CKCE…KRAH), 104–128 (YVCY…QYIH), 134–158 (FKCS…EKTH), 161–187 (YPCR…AELH), 190–212 (VTCS…KKIH), 219–244 (YRCP…LTFH), and 250–274 (FVCE…FNTH). Positions 271–339 (FNTHDPEKKK…LPVLENLTLK (69 aa)) are disordered. The span at 299–309 (KPKKSKKKKKP) shows a compositional bias: basic residues. The segment covering 311-323 (QTPAMESQEQQPD) has biased composition (polar residues).

Its subcellular location is the nucleus. Its function is as follows. Involved in ribosomal large subunit biogenesis. Interacts with the internal control region (ICR) of approximately 50 bases within the 5S RNA genes, is required for correct transcription of these genes by RNA polymerase III. Also binds the transcribed 5S RNA's. This is Transcription factor IIIA (gtf3a) from Anaxyrus americanus (American toad).